We begin with the raw amino-acid sequence, 240 residues long: tRNA1(Val) (adenine(37)-N6)-methyltransferase (240 aa).

It belongs to the methyltransferase superfamily. tRNA (adenine-N(6)-)-methyltransferase family.

It localises to the cytoplasm. The enzyme catalyses adenosine(37) in tRNA1(Val) + S-adenosyl-L-methionine = N(6)-methyladenosine(37) in tRNA1(Val) + S-adenosyl-L-homocysteine + H(+). Specifically methylates the adenine in position 37 of tRNA(1)(Val) (anticodon cmo5UAC). The chain is tRNA1(Val) (adenine(37)-N6)-methyltransferase from Vibrio cholerae serotype O1 (strain ATCC 39315 / El Tor Inaba N16961).